The chain runs to 377 residues: Chaperone protein DnaJ (377 aa).

The region spanning 5 to 70 (DYYQILGIPK…EKRSAYDQYG (66 aa)) is the J domain. Residues 132–210 (GIKKEIQIPT…CHGQGRVETY (79 aa)) form a CR-type zinc finger. The Zn(2+) site is built by Cys-145, Cys-148, Cys-162, Cys-165, Cys-184, Cys-187, Cys-198, and Cys-201. 4 CXXCXGXG motif repeats span residues 145-152 (CKTCYGSG), 162-169 (CSTCHGKG), 184-191 (CPTCHGKG), and 198-205 (CNLCHGQG).

The protein belongs to the DnaJ family. In terms of assembly, homodimer. It depends on Zn(2+) as a cofactor.

The protein localises to the cytoplasm. Participates actively in the response to hyperosmotic and heat shock by preventing the aggregation of stress-denatured proteins and by disaggregating proteins, also in an autonomous, DnaK-independent fashion. Unfolded proteins bind initially to DnaJ; upon interaction with the DnaJ-bound protein, DnaK hydrolyzes its bound ATP, resulting in the formation of a stable complex. GrpE releases ADP from DnaK; ATP binding to DnaK triggers the release of the substrate protein, thus completing the reaction cycle. Several rounds of ATP-dependent interactions between DnaJ, DnaK and GrpE are required for fully efficient folding. Also involved, together with DnaK and GrpE, in the DNA replication of plasmids through activation of initiation proteins. The chain is Chaperone protein DnaJ from Buchnera aphidicola subsp. Acyrthosiphon pisum (strain 5A).